The following is a 196-amino-acid chain: Elongation factor Ts (196 aa).

Positions 80-83 are involved in Mg(2+) ion dislocation from EF-Tu; sequence TDFV.

This sequence belongs to the EF-Ts family.

Its subcellular location is the cytoplasm. Functionally, associates with the EF-Tu.GDP complex and induces the exchange of GDP to GTP. It remains bound to the aminoacyl-tRNA.EF-Tu.GTP complex up to the GTP hydrolysis stage on the ribosome. The polypeptide is Elongation factor Ts (Thermus thermophilus (strain ATCC BAA-163 / DSM 7039 / HB27)).